The following is a 509-amino-acid chain: Meiotically up-regulated gene 157 protein (509 aa).

Transmembrane regions (helical) follow at residues 4 to 24 (WQAI…NIPW), 140 to 160 (LATL…QFPY), 296 to 316 (ACVL…LSHL), 368 to 388 (ILFM…LGFV), and 417 to 437 (ISGI…SLIV).

The protein resides in the endoplasmic reticulum membrane. Its function is as follows. Has a role in meiosis. In Schizosaccharomyces pombe (strain 972 / ATCC 24843) (Fission yeast), this protein is Meiotically up-regulated gene 157 protein (mug157).